An 89-amino-acid polypeptide reads, in one-letter code: Large ribosomal subunit protein bL27 (89 aa).

A disordered region spans residues 1-20 (MAHKKAGGSSRNGRDSAGQR).

This sequence belongs to the bacterial ribosomal protein bL27 family.

The polypeptide is Large ribosomal subunit protein bL27 (Paramagnetospirillum magneticum (strain ATCC 700264 / AMB-1) (Magnetospirillum magneticum)).